A 91-amino-acid polypeptide reads, in one-letter code: Small ribosomal subunit protein uS19 (91 aa).

This sequence belongs to the universal ribosomal protein uS19 family.

In terms of biological role, protein S19 forms a complex with S13 that binds strongly to the 16S ribosomal RNA. The sequence is that of Small ribosomal subunit protein uS19 from Prochlorococcus marinus (strain MIT 9515).